The primary structure comprises 182 residues: Peptidoglycan-recognition protein SB2 (182 aa).

The signal sequence occupies residues 1–17 (MKLQLALVLCGLTLALG). In terms of domain architecture, N-acetylmuramoyl-L-alanine amidase spans 40 to 165 (PVRLIIIHHT…CQTKATACPG (126 aa)). His47 lines the Zn(2+) pocket. A disulfide bridge connects residues Cys54 and Cys60. Asn149 is a glycosylation site (N-linked (GlcNAc...) asparagine). Positions 155 and 163 each coordinate Zn(2+).

This sequence belongs to the N-acetylmuramoyl-L-alanine amidase 2 family. Zn(2+) is required as a cofactor.

Its subcellular location is the secreted. The catalysed reaction is Hydrolyzes the link between N-acetylmuramoyl residues and L-amino acid residues in certain cell-wall glycopeptides.. Functionally, N-acetylmuramyl-L-alanine amidase involved in innate immunity by degrading bacterial peptidoglycans (PGN). Probably plays a scavenger role by digesting biologically active PGN into biologically inactive fragments. Has no direct bacteriolytic activity. The polypeptide is Peptidoglycan-recognition protein SB2 (PGRP-SB2) (Drosophila melanogaster (Fruit fly)).